We begin with the raw amino-acid sequence, 570 residues long: Endo-1,4-beta-xylanase 4 (570 aa).

Positions 1–24 (MKRFNYGFFHLVLFLISLLLLGSG) are cleaved as a signal peptide. Residues asparagine 92, asparagine 190, and asparagine 300 are each glycosylated (N-linked (GlcNAc...) asparagine). Positions 195–494 (EGSVISIEQI…TQAGDLIDKL (300 aa)) constitute a GH10 domain. The active-site Proton donor is glutamate 325. N-linked (GlcNAc...) asparagine glycosylation occurs at asparagine 339. Glutamate 432 functions as the Nucleophile in the catalytic mechanism. N-linked (GlcNAc...) asparagine glycosylation occurs at asparagine 545.

The protein belongs to the glycosyl hydrolase 10 (cellulase F) family.

It carries out the reaction Endohydrolysis of (1-&gt;4)-beta-D-xylosidic linkages in xylans.. It participates in glycan degradation; xylan degradation. Binds to and hydrolyzes insoluble and soluble xylan substrates. The chain is Endo-1,4-beta-xylanase 4 from Arabidopsis thaliana (Mouse-ear cress).